We begin with the raw amino-acid sequence, 1503 residues long: Transient receptor potential cation channel subfamily M member 2 (1503 aa).

Residues 1–20 (MEPSALRKAGSEQEEGFEGL) are disordered. The Cytoplasmic portion of the chain corresponds to 1–752 (MEPSALRKAG…WWGQLSVDNG (752 aa)). Positions 174, 179, 302, 333, and 336 each coordinate ADP-D-ribose. T740 is modified (phosphothreonine). Residues 753-769 (LWRVTLCMLAFPLLLTG) lie within the membrane without spanning it. Topologically, residues 770–795 (LISFREKRLQDVGTPAARARAFFTAP) are cytoplasmic. The helical transmembrane segment at 796-816 (VVVFHLNILSYFAFLCLFAYV) threads the bilayer. Residues 817–827 (LMVDFQPVPSW) lie on the Extracellular side of the membrane. The chain crosses the membrane as a helical span at residues 828-848 (CECAIYLWLFSLVCEEMRQLF). 2 residues coordinate Ca(2+): E843 and Q846. Residues 849–867 (YDPDECGLMKKAALYFSDF) lie on the Cytoplasmic side of the membrane. Residues 868-888 (WNKLDVGAILLFVAGLTCRLI) form a helical membrane-spanning segment. Residue N869 coordinates Ca(2+). At 889-896 (PATLYPGR) the chain is on the extracellular side. A helical transmembrane segment spans residues 897 to 917 (VILSLDFILFCLRLMHIFTIS). Residues 918–929 (KTLGPKIIIVKR) lie on the Cytoplasmic side of the membrane. The helical transmembrane segment at 930-950 (MMKDVFFFLFLLAVWVVSFGV) threads the bilayer. At 951–970 (AKQAILIHNERRVDWLFRGA) the chain is on the extracellular side. Residues 971-985 (VYHSYLTIFGQIPGY) constitute an intramembrane region (pore-forming). The short motif at 979-982 (FGQI) is the Selectivity filter element. Residues 986–1022 (IDGVNFNPEHCSPNGTDPYKPKCPESDATQQRPAFPE) are Extracellular-facing. Residues C996 and C1008 are joined by a disulfide bond. Residues 1023-1044 (WLTVLLLCLYLLFTNILLLNLL) traverse the membrane as a helical segment. Residues 1045-1079 (IAMFNYTFQQVQEHTDQIWKFQRHDLIEEYHGRPA) are Cytoplasmic-facing. E1073 contacts Ca(2+). An intramembrane segment occupies 1080-1098 (APPPFILLSHLQLFIKRVV). At 1099–1503 (LKTPAKRHKQ…KAAAEFGAHY (405 aa)) the chain is on the cytoplasmic side. The interval 1206-1237 (EADVPTLASQKAAEEPDAEPGGRKKTEEPGDS) is disordered. Positions 1354 to 1498 (RWRRNEDGAI…KTLLQKAAAE (145 aa)) constitute a Nudix hydrolase domain. The ADP-D-ribose site is built by L1381 and S1382. Positions 1390–1411 (GSREPGEMLPRKLKRILRQEHW) match the Nudix box motif. ADP-D-ribose is bound by residues D1431, R1433, Y1485, and N1487.

This sequence belongs to the transient receptor (TC 1.A.4) family. LTrpC subfamily. TRPM2 sub-subfamily. In terms of assembly, homotetramer. Isoform 1 can interact with isoform 3. This interaction decreases Ca(2+) influx through isoform 1 and suppresses susceptibility to oxidative stress-induced cell death. In terms of processing, phosphorylation of TRPM2 at Thr-740 by protein kinase C (PKC) counteracts the effect of cytosolic Ca(2+) and elevates the temperature threshold. As to expression, highly expressed in brain and peripheral blood cells, such as neutrophils. Also detected in bone marrow, spleen, heart, liver and lung. Isoform 2 is found in neutrophil granulocytes.

It localises to the cell membrane. The protein localises to the perikaryon. Its subcellular location is the cell projection. The protein resides in the cytoplasmic vesicle. It is found in the lysosome. It carries out the reaction Ca(2+)(in) = Ca(2+)(out). The enzyme catalyses Na(+)(in) = Na(+)(out). With respect to regulation, activated by intracellular ADP-ribose, beta-NAD (NAD(+)) and similar compounds, and by oxidative stress caused by reactive oxygen or nitrogen species. Ca(2+) and PI(4,5)P2 are required for channel opening by ADP-ribose. Activation by ADP-ribose and beta-NAD is strongly increased by moderate heat (35 to 40 degrees Celsius). Likewise, reactive oxygen species lower the threshold for activation by moderate heat (37 degrees Celsius). Activated by moderate heat (35 to 40 degrees Celsius). Inactivated by exposure to extracellular pH between 4.0 and 6.5; irreversibly inactivated when open channels are exposed to extracellular pH between 4.0 and 6.5, while pre-exposure of closed channels to extracellular pH 5.5 gives rise to currents that rapidly inactivate, but protects against irreversible inactivation. Inactivated by intracellular ATP. Activated by arachidonic acid. Inhibited by 2-aminoethyl diphenylborinate (2-APB). Nonselective, voltage-independent cation channel that mediates Na(+) and Ca(2+) influx, leading to increased cytoplasmic Ca(2+) levels. Functions as a ligand-gated ion channel, gated by intracellular adenosine diphosphate ribose (ADP-ribose), Ca(2+), warm temperature, and oxidative stress. The precise physiological activators are under debate; the true, physiological activators may be ADP-ribose and ADP-ribose-2'-phosphate. Binding of ADP-ribose to the cytoplasmic Nudix domain causes a conformation change; the channel is primed but still requires Ca(2+) binding to trigger channel opening. Extracellular Ca(2+) passes through the channel and increases channel activity. Contributes to Ca(2+) release from intracellular stores in response to ADP-ribose. Plays a role in numerous processes that involve signaling via intracellular Ca(2+) levels. Besides, mediates the release of lysosomal Zn(2+) stores in response to reactive oxygen species, leading to increased cytosolic Zn(2+) levels. Plays a role in mediating behavorial and physiological responses to moderate heat and thereby contributes to body temperature homeostasis. Plays a role in insulin secretion, a process that requires increased cytoplasmic Ca(2+) levels. Required for normal IFNG and cytokine secretion and normal innate immune immunity in response to bacterial infection. Required for normal phagocytosis and cytokine release by macrophages exposed to zymosan (in vitro). Plays a role in dendritic cell differentiation and maturation, and in dendritic cell chemotaxis via its role in regulating cytoplasmic Ca(2+) levels. Plays a role in the regulation of the reorganization of the actin cytoskeleton and filopodia formation in response to reactive oxygen species via its role in increasing cytoplasmic Ca(2+) and Zn(2+) levels. Confers susceptibility to cell death following oxidative stress. In terms of biological role, lacks cation channel activity. Does not mediate cation transport in response to oxidative stress or ADP-ribose. Its function is as follows. Lacks cation channel activity and negatively regulates the channel activity of isoform 1. Negatively regulates susceptibility to cell death in reposponse to oxidative stress. This chain is Transient receptor potential cation channel subfamily M member 2 (TRPM2), found in Homo sapiens (Human).